Here is a 384-residue protein sequence, read N- to C-terminus: Chaperone protein DnaJ (384 aa).

Positions 4 to 68 (DFYEILGVSR…EKRQMYDQMG (65 aa)) constitute a J domain. Disordered stretches follow at residues 29–60 (REYHPDVSDDPDAEEKFKQAKKAKEVLTDEEK) and 73–131 (EQAE…GQDL). The segment covering 42–60 (EEKFKQAKKAKEVLTDEEK) has biased composition (basic and acidic residues). Residues 80–101 (GAGGGGGRGGMGGDPFGGGAGG) show a composition bias toward gly residues. The segment covering 102–111 (FDMQDIFDQF) has biased composition (low complexity). The segment covering 112–121 (FGGGGRGGRG) has biased composition (gly residues). A CR-type zinc finger spans residues 145-227 (GATKQLNVTR…CRGNGVVQND (83 aa)). Zn(2+)-binding residues include Cys158, Cys161, Cys175, and Cys178. 4 CXXCXGXG motif repeats span residues 158-165 (CDDCDGAG), 175-182 (CPECNGQG), 201-208 (CRRCDGEG), and 215-222 (CSTCRGNG). Positions 160 to 191 (DCDGAGHPPGADSETCPECNGQGQTTQVQQTP) are disordered. Residues 180-190 (GQGQTTQVQQT) show a composition bias toward low complexity. Zn(2+) contacts are provided by Cys201, Cys204, Cys215, and Cys218.

The protein belongs to the DnaJ family. As to quaternary structure, homodimer. Zn(2+) serves as cofactor.

It is found in the cytoplasm. Participates actively in the response to hyperosmotic and heat shock by preventing the aggregation of stress-denatured proteins and by disaggregating proteins, also in an autonomous, DnaK-independent fashion. Unfolded proteins bind initially to DnaJ; upon interaction with the DnaJ-bound protein, DnaK hydrolyzes its bound ATP, resulting in the formation of a stable complex. GrpE releases ADP from DnaK; ATP binding to DnaK triggers the release of the substrate protein, thus completing the reaction cycle. Several rounds of ATP-dependent interactions between DnaJ, DnaK and GrpE are required for fully efficient folding. Also involved, together with DnaK and GrpE, in the DNA replication of plasmids through activation of initiation proteins. The chain is Chaperone protein DnaJ from Haloarcula marismortui (strain ATCC 43049 / DSM 3752 / JCM 8966 / VKM B-1809) (Halobacterium marismortui).